We begin with the raw amino-acid sequence, 40 residues long: Large ribosomal subunit protein bL33c (40 aa).

It belongs to the bacterial ribosomal protein bL33 family.

It localises to the plastid. Its subcellular location is the chloroplast. The protein is Large ribosomal subunit protein bL33c (rpl33) of Pisum sativum (Garden pea).